A 366-amino-acid chain; its full sequence is Anhydro-N-acetylmuramic acid kinase (366 aa).

10–17 (GTSMDGID) is an ATP binding site.

Belongs to the anhydro-N-acetylmuramic acid kinase family.

The catalysed reaction is 1,6-anhydro-N-acetyl-beta-muramate + ATP + H2O = N-acetyl-D-muramate 6-phosphate + ADP + H(+). The protein operates within amino-sugar metabolism; 1,6-anhydro-N-acetylmuramate degradation. Its pathway is cell wall biogenesis; peptidoglycan recycling. Functionally, catalyzes the specific phosphorylation of 1,6-anhydro-N-acetylmuramic acid (anhMurNAc) with the simultaneous cleavage of the 1,6-anhydro ring, generating MurNAc-6-P. Is required for the utilization of anhMurNAc either imported from the medium or derived from its own cell wall murein, and thus plays a role in cell wall recycling. In Legionella pneumophila subsp. pneumophila (strain Philadelphia 1 / ATCC 33152 / DSM 7513), this protein is Anhydro-N-acetylmuramic acid kinase.